We begin with the raw amino-acid sequence, 289 residues long: Probable 2-keto-3-deoxyxylonate dehydratase (289 aa).

Residues Glu144, Glu146, and Asp164 each coordinate Mg(2+).

This sequence belongs to the FAH family.

It catalyses the reaction 2-dehydro-3-deoxy-D-arabinonate = 2,5-dioxopentanoate + H2O. It functions in the pathway carbohydrate metabolism; D-xylose degradation. In terms of biological role, probable 2-keto-3-deoxyxylonate dehydratase involved in the degradation of D-xylose, a major component of hemicelluloses such as xylan. Catalyzes the fourth reaction in the xylose utilization pathway through dehydratation of 2-dehydro-3-deoxy-D-xylonate into alpha-ketoglutarate semialdehyde (2,5-dioxopentanoate). The protein is Probable 2-keto-3-deoxyxylonate dehydratase of Haloferax volcanii (strain ATCC 29605 / DSM 3757 / JCM 8879 / NBRC 14742 / NCIMB 2012 / VKM B-1768 / DS2) (Halobacterium volcanii).